The primary structure comprises 362 residues: Chorismate synthase (362 aa).

The interval 39–59 (ADLQGDLDRRKPGTSRYTTPR) is disordered. Residues Arg48 and Arg54 each coordinate NADP(+). FMN contacts are provided by residues 125-127 (RSS), 238-239 (NA), Gly278, 293-297 (KPTSS), and Arg319.

This sequence belongs to the chorismate synthase family. In terms of assembly, homotetramer. FMNH2 is required as a cofactor.

The catalysed reaction is 5-O-(1-carboxyvinyl)-3-phosphoshikimate = chorismate + phosphate. It participates in metabolic intermediate biosynthesis; chorismate biosynthesis; chorismate from D-erythrose 4-phosphate and phosphoenolpyruvate: step 7/7. In terms of biological role, catalyzes the anti-1,4-elimination of the C-3 phosphate and the C-6 proR hydrogen from 5-enolpyruvylshikimate-3-phosphate (EPSP) to yield chorismate, which is the branch point compound that serves as the starting substrate for the three terminal pathways of aromatic amino acid biosynthesis. This reaction introduces a second double bond into the aromatic ring system. The chain is Chorismate synthase from Aeromonas hydrophila subsp. hydrophila (strain ATCC 7966 / DSM 30187 / BCRC 13018 / CCUG 14551 / JCM 1027 / KCTC 2358 / NCIMB 9240 / NCTC 8049).